A 169-amino-acid chain; its full sequence is Peptide methionine sulfoxide reductase MsrA (169 aa).

Cysteine 10 is an active-site residue.

This sequence belongs to the MsrA Met sulfoxide reductase family.

It catalyses the reaction L-methionyl-[protein] + [thioredoxin]-disulfide + H2O = L-methionyl-(S)-S-oxide-[protein] + [thioredoxin]-dithiol. The enzyme catalyses [thioredoxin]-disulfide + L-methionine + H2O = L-methionine (S)-S-oxide + [thioredoxin]-dithiol. Its function is as follows. Has an important function as a repair enzyme for proteins that have been inactivated by oxidation. Catalyzes the reversible oxidation-reduction of methionine sulfoxide in proteins to methionine. The sequence is that of Peptide methionine sulfoxide reductase MsrA from Streptococcus mutans serotype c (strain ATCC 700610 / UA159).